A 212-amino-acid polypeptide reads, in one-letter code: Regulatory protein RecX (212 aa).

It belongs to the RecX family.

The protein localises to the cytoplasm. Modulates RecA activity. The sequence is that of Regulatory protein RecX from Clostridium botulinum (strain Alaska E43 / Type E3).